The following is a 220-amino-acid chain: Metalloproteinase inhibitor 2 (220 aa).

The signal sequence occupies residues 1-26 (MPGAALPSLLAWLAVLLLGRARPADA). C27 contacts Zn(2+). 2 involved in metalloproteinase-binding regions span residues 27-30 (CSCS) and 95-96 (TE). 6 disulfide bridges follow: C27–C98, C29–C127, C39–C152, C154–C201, C159–C164, and C172–C193. The NTR domain maps to 27 to 152 (CSCSPIHPQQ…SLNQRYQMGC (126 aa)).

It belongs to the protease inhibitor I35 (TIMP) family. The activity of TIMP2 is dependent on the presence of disulfide bonds.

Its subcellular location is the secreted. In terms of biological role, complexes with metalloproteinases (such as collagenases) and irreversibly inactivates them by binding to their catalytic zinc cofactor. The protein is Metalloproteinase inhibitor 2 (TIMP2) of Gallus gallus (Chicken).